The primary structure comprises 957 residues: Ribonuclease 3-like protein 3 (957 aa).

Positions 4 to 142 constitute an RNase III 1 domain; that stretch reads VEAVEKILNY…IAATVFIDVN (139 aa). The DRBM 1 domain occupies 307-382; that stretch reads NGRGELIEIC…AYHMIRALES (76 aa). One can recognise an RNase III 2 domain in the interval 415–551; the sequence is VEAVEKILNY…VAGAVYIDVK (137 aa). DRBM domains lie at 566–645 and 837–912; these read EPIY…KLSE and DEKG…ALES.

Functionally, ribonuclease that cleaves double-stranded RNA (dsRNA). In Arabidopsis thaliana (Mouse-ear cress), this protein is Ribonuclease 3-like protein 3 (RTL3).